Here is a 782-residue protein sequence, read N- to C-terminus: Protein VAC14 homolog (782 aa).

Met-1 carries the post-translational modification N-acetylmethionine. HEAT repeat units lie at residues 5 to 42 (KDFA…EFVA), 89 to 126 (LYLK…VARG), 171 to 208 (FDLV…VPDI), and 212 to 249 (DYLP…EIKK). At Thr-11 the chain carries Phosphothreonine. Disordered stretches follow at residues 335–372 (EDDE…DGSC) and 471–517 (SSPA…LECS). An HEAT 5 repeat occupies 438-475 (RHTDSLFPILLQTLSDESDEVILKDLEVLAEIASSPAG). A compositionally biased stretch (low complexity) spans 478–488 (DDPGPLDGPDL). Thr-499 carries the post-translational modification Phosphothreonine. Positions 506 to 517 (LNTSGTKGLECS) are enriched in polar residues. Phosphoserine is present on Ser-517. The HEAT 6 repeat unit spans residues 560–598 (LNAENIFHSMADILLREEDLKFASTMVHALNTILLTSTE). Position 743 is a phosphoserine (Ser-743). The segment at 773–777 (GDHLD) is mediates interaction with the PDZ domain of NOS1.

It belongs to the VAC14 family. Forms pentamers. Component of the PI(3,5)P2 regulatory complex/PAS complex, at least composed of PIKFYVE, FIG4 and VAC14. VAC14 nucleates the assembly of the complex and serves as a scaffold by pentamerizing into a star-shaped structure, which can bind a single copy each of PIKFYVE and FIG4 and coordinates their activities. Interacts with NOS1. As to quaternary structure, (Microbial infection) Interacts with HTLV-1 Tax. In terms of tissue distribution, ubiquitously expressed.

It localises to the endosome membrane. The protein resides in the microsome membrane. In terms of biological role, scaffold protein component of the PI(3,5)P2 regulatory complex which regulates both the synthesis and turnover of phosphatidylinositol 3,5-bisphosphate (PtdIns(3,5)P2). Pentamerizes into a star-shaped structure and nucleates the assembly of the complex. The pentamer binds a single copy each of PIKFYVE and FIG4 and coordinates both PIKfyve kinase activity and FIG4 phosphatase activity, being required to maintain normal levels of phosphatidylinositol 3-phosphate (PtdIns(3)P) and phosphatidylinositol 5-phosphate (PtdIns(5)P). Plays a role in the biogenesis of endosome carrier vesicles (ECV) / multivesicular bodies (MVB) transport intermediates from early endosomes. In Homo sapiens (Human), this protein is Protein VAC14 homolog (VAC14).